The chain runs to 393 residues: MTRVVLAAAYRTPIGVFGGAFKDVPAYDLGATLIEHIIKETGLNPSEIDEVIIGNVLQAGQGQNPARIAAMKGGLPETVPAFTVNKVCGSGLKSIQLAYQSIVTGENDIVLAGGMENMSQSPMLVNNSRFGFKMGHQSMVDSMVYDGLTDVFNQYHMGITAENLVEQYGISREEQDTFAVNSQQKAVRAQQNGEFDSEIVPVSIPQRKGEPILVTKDEGVRENVSVEKLSRLRPAFKKDGTVTAGNASGINDGAAMMLVMSEDKAKELNIEPLAVLDGFGSHGVDPSIMGIAPVGAVEKALKRSKKELSDIDVFELNEAFAAQSLAVDRELKLPPEKVNVKGGAIALGHPIGASGARVLVTLLHQLNDEVETGLTSLCIGGGQAIAAVVSKYK.

Cysteine 88 serves as the catalytic Acyl-thioester intermediate. Active-site proton acceptor residues include histidine 349 and cysteine 378.

Belongs to the thiolase-like superfamily. Thiolase family.

The protein localises to the cytoplasm. It carries out the reaction 2 acetyl-CoA = acetoacetyl-CoA + CoA. This is Probable acetyl-CoA acyltransferase from Staphylococcus aureus (strain MSSA476).